Here is a 211-residue protein sequence, read N- to C-terminus: MRLHVVDHPLVAHKLTTLRDQRTDSPTFRRLADELVTLLAYEATRDVRTEQVDIVTPVAPTTGVRLSHPRPLVVPILRAGLGMLDGMVRLLPTAEVGFLGMVRDEETLQASTYATRMPDDLSGRQVYVLDPMLATGGTLVAAIQELIKRGADDVTAVVLLAAPEGVEIMERDLAGTPVTVVTASVDERLNEHGYIVPGLGDAGDRMYGAAE.

Residues R78, R103, and 130–138 (DPMLATGGT) contribute to the 5-phospho-alpha-D-ribose 1-diphosphate site. Residues I195 and 200-202 (GDA) contribute to the uracil site. D201 provides a ligand contact to 5-phospho-alpha-D-ribose 1-diphosphate.

The protein belongs to the UPRTase family. Mg(2+) serves as cofactor.

The enzyme catalyses UMP + diphosphate = 5-phospho-alpha-D-ribose 1-diphosphate + uracil. The protein operates within pyrimidine metabolism; UMP biosynthesis via salvage pathway; UMP from uracil: step 1/1. Its activity is regulated as follows. Allosterically activated by GTP. Functionally, catalyzes the conversion of uracil and 5-phospho-alpha-D-ribose 1-diphosphate (PRPP) to UMP and diphosphate. The chain is Uracil phosphoribosyltransferase from Streptomyces avermitilis (strain ATCC 31267 / DSM 46492 / JCM 5070 / NBRC 14893 / NCIMB 12804 / NRRL 8165 / MA-4680).